Here is a 100-residue protein sequence, read N- to C-terminus: Urease subunit gamma (100 aa).

Belongs to the urease gamma subunit family. In terms of assembly, heterotrimer of UreA (gamma), UreB (beta) and UreC (alpha) subunits. Three heterotrimers associate to form the active enzyme.

The protein resides in the cytoplasm. It catalyses the reaction urea + 2 H2O + H(+) = hydrogencarbonate + 2 NH4(+). The protein operates within nitrogen metabolism; urea degradation; CO(2) and NH(3) from urea (urease route): step 1/1. This is Urease subunit gamma from Acinetobacter baumannii (strain AB307-0294).